Consider the following 478-residue polypeptide: MDRSLGWQGNSVPEDRTEAGIKRFLEDTTDDGELSKFVKDFSGNASCHPPEAKTWASRPQVPEPRPQAPDLYDDDLEFRPPSRPQSSDNQQYFCAPAPLSPSARPRSPWGKLDPYDSSEDDKEYVGFATLPNQVHRKSVKKGFDFTLMVAGESGLGKSTLVNSLFLTDLYRDRKLLGAEERIMQTVEITKHAVDIEEKGVRLRLTIVDTPGFGDAVNNTECWKPVAEYIDQQFEQYFRDESGLNRKNIQDNRVHCCLYFISPFGHGLRPLDVEFMKALHQRVNIVPILAKADTLTPPEVDHKKRKIREEIEHFGIKIYQFPDCDSDEDEDFKLQDQALKESIPFAVIGSNTVVEARGRRVRGRLYPWGIVEVENPGHCDFVKLRTMLVRTHMQDLKDVTRETHYENYRAQCIQSMTRLVVKERNRNKLTRESGTDFPIPAVPPGTDPETEKLIREKDEELRRMQEMLHKIQKQMKENY.

Positions methionine 1–tyrosine 115 are disordered. A compositionally biased stretch (basic and acidic residues) spans proline 13 to glutamate 26. Residues alanine 95–proline 108 show a composition bias toward low complexity. Phosphoserine is present on residues serine 117 and serine 118. In terms of domain architecture, Septin-type G spans lysine 141–serine 414. The G1 motif stretch occupies residues glycine 151 to serine 158. GTP-binding positions include glycine 151 to serine 158 and threonine 185. Positions aspartate 208 to glycine 211 are G3 motif. The interval alanine 289–aspartate 292 is G4 motif. Residue lysine 290–glutamate 298 coordinates GTP. Serine 325 carries the phosphoserine modification. Glycine 348 and arginine 363 together coordinate GTP. The segment at leucine 428–glutamate 448 is disordered. The residue at position 432 (serine 432) is a Phosphoserine. Threonine 434 is modified (phosphothreonine). Positions proline 447–tyrosine 478 form a coiled coil.

Belongs to the TRAFAC class TrmE-Era-EngA-EngB-Septin-like GTPase superfamily. Septin GTPase family. In terms of assembly, septins polymerize into heterooligomeric protein complexes that form filaments, and can associate with cellular membranes, actin filaments and microtubules. GTPase activity is required for filament formation. Interacts with SEPTIN8. In a mesenchymal cell line, interacts with SEPTIN9 isoform 2 variants HNA Trp-106 and Phe-111, but not the wild type SEPTIN9. Component of a septin core octameric complex consisting of SEPTIN12, SEPTIN7, SEPTIN6 and SEPTIN2 or SEPTIN4 in the order 12-7-6-2-2-6-7-12 or 12-7-6-4-4-6-7-12. Interacts with SEPTIN14 (via C-terminus). Interacts with DYRK1A. Interacts with SLC6A3/DAT and SNCA/alpha-synuclein. Interacts with STX1A; in the striatum. Interacts with XIAP (via BIR3 domain) following the induction of apoptosis. Interacts with AREL1 (via HECT domain); in the cytoplasm following induction of apoptosis. Part of a complex composed of SEPTIN4 isoform ARTS, XIAP and BCL2, within the complex interacts with both BCL2 (via BH3 domain) and XIAP, ARTS acts as a scaffold protein and stabilizes the complex. Interacts with XIAP (via BIR3 domain) following the induction of apoptosis. Phosphorylated by DYRK1A. In terms of processing, ubiquitinated by AREL1. Widely expressed in adult and fetal tissues with highest expression in adult brain (at protein level), heart, liver and adrenal gland and fetal heart, kidney, liver and lung. Expressed in presynaptic terminals of dopaminergic neurons projecting from the substantia nigra pars compacta to the striatum (at protein level). Expressed in axonal varicosities in dopaminergic nerve terminals (at protein level). Expressed in the putamen and in the adjacent cerebral cortex (at protein level). Expressed in colonic crypts (at protein level). Also expressed in colorectal cancers and malignant melanomas. Expressed in platelets. In terms of tissue distribution, highly expressed in the brain and heart.

It is found in the cytoplasm. It localises to the cell projection. The protein localises to the cilium. The protein resides in the flagellum. Its subcellular location is the cytoplasmic vesicle. It is found in the secretory vesicle. It localises to the axon. The protein localises to the dendrite. The protein resides in the perikaryon. Its subcellular location is the synapse. It is found in the mitochondrion. It localises to the nucleus. In terms of biological role, filament-forming cytoskeletal GTPase. Pro-apoptotic protein involved in LGR5-positive intestinal stem cell and Paneth cell expansion in the intestines, via its interaction with XIAP. May also play a role in the regulation of cell fate in the intestine. Positive regulator of apoptosis involved in hematopoietic stem cell homeostasis; via its interaction with XIAP. Negative regulator of repair and hair follicle regeneration in response to injury, due to inhibition of hair follicle stem cell proliferation, potentially via its interaction with XIAP. Plays an important role in male fertility and sperm motility. During spermiogenesis, essential for the establishment of the annulus (a fibrous ring structure connecting the midpiece and the principal piece of the sperm flagellum) which is a requisite for the structural and mechanical integrity of the sperm. Involved in the migration of cortical neurons and the formation of neuron leading processes during embryonic development. Required for dopaminergic metabolism in presynaptic autoreceptors; potentially via activity as a presynaptic scaffold protein. Required for the induction of cell death mediated by TGF-beta and possibly by other apoptotic stimuli. Induces apoptosis through binding and inhibition of XIAP resulting in significant reduction in XIAP levels, leading to caspase activation and cell death. Mediates the interaction between BCL2 and XIAP, thereby positively regulating the ubiquitination and degradation of BCL2 and promoting apoptosis. This is Septin-4 from Homo sapiens (Human).